Reading from the N-terminus, the 51-residue chain is Large ribosomal subunit protein eL39 (51 aa).

This sequence belongs to the eukaryotic ribosomal protein eL39 family.

This is Large ribosomal subunit protein eL39 from Methanopyrus kandleri (strain AV19 / DSM 6324 / JCM 9639 / NBRC 100938).